We begin with the raw amino-acid sequence, 307 residues long: Ribosomal RNA small subunit methyltransferase H (307 aa).

Residues 33 to 35 (GGY), Asp-51, Phe-82, Asp-96, and Gln-103 each bind S-adenosyl-L-methionine.

The protein belongs to the methyltransferase superfamily. RsmH family.

It localises to the cytoplasm. It catalyses the reaction cytidine(1402) in 16S rRNA + S-adenosyl-L-methionine = N(4)-methylcytidine(1402) in 16S rRNA + S-adenosyl-L-homocysteine + H(+). Functionally, specifically methylates the N4 position of cytidine in position 1402 (C1402) of 16S rRNA. The polypeptide is Ribosomal RNA small subunit methyltransferase H (Rickettsia rickettsii (strain Iowa)).